Reading from the N-terminus, the 486-residue chain is Glycogen synthase (486 aa).

Residue Lys15 participates in ADP-alpha-D-glucose binding.

It belongs to the glycosyltransferase 1 family. Bacterial/plant glycogen synthase subfamily.

The enzyme catalyses [(1-&gt;4)-alpha-D-glucosyl](n) + ADP-alpha-D-glucose = [(1-&gt;4)-alpha-D-glucosyl](n+1) + ADP + H(+). The protein operates within glycan biosynthesis; glycogen biosynthesis. In terms of biological role, synthesizes alpha-1,4-glucan chains using ADP-glucose. This Thermotoga petrophila (strain ATCC BAA-488 / DSM 13995 / JCM 10881 / RKU-1) protein is Glycogen synthase.